We begin with the raw amino-acid sequence, 356 residues long: UDP-N-acetylglucosamine--N-acetylmuramyl-(pentapeptide) pyrophosphoryl-undecaprenol N-acetylglucosamine transferase (356 aa).

Residues 12-14 (TGG), asparagine 124, arginine 163, serine 188, isoleucine 242, and glutamine 287 each bind UDP-N-acetyl-alpha-D-glucosamine.

The protein belongs to the glycosyltransferase 28 family. MurG subfamily.

It localises to the cell inner membrane. The catalysed reaction is di-trans,octa-cis-undecaprenyl diphospho-N-acetyl-alpha-D-muramoyl-L-alanyl-D-glutamyl-meso-2,6-diaminopimeloyl-D-alanyl-D-alanine + UDP-N-acetyl-alpha-D-glucosamine = di-trans,octa-cis-undecaprenyl diphospho-[N-acetyl-alpha-D-glucosaminyl-(1-&gt;4)]-N-acetyl-alpha-D-muramoyl-L-alanyl-D-glutamyl-meso-2,6-diaminopimeloyl-D-alanyl-D-alanine + UDP + H(+). It participates in cell wall biogenesis; peptidoglycan biosynthesis. In terms of biological role, cell wall formation. Catalyzes the transfer of a GlcNAc subunit on undecaprenyl-pyrophosphoryl-MurNAc-pentapeptide (lipid intermediate I) to form undecaprenyl-pyrophosphoryl-MurNAc-(pentapeptide)GlcNAc (lipid intermediate II). The protein is UDP-N-acetylglucosamine--N-acetylmuramyl-(pentapeptide) pyrophosphoryl-undecaprenol N-acetylglucosamine transferase of Pseudomonas syringae pv. tomato (strain ATCC BAA-871 / DC3000).